Reading from the N-terminus, the 231-residue chain is MACRRWWSTAVVFPPVARPPGSAGSHFLGGAGVRGVEIGGNFIKFTAIGVYLEDAAVPALAKKWGGKTADELASDAAFFRDVVTGDFEKFTRVTMILPLTGEQYAEKVTENCVAFWKAAGLYTDAEGVAVEKFREVFKPETFAPGRSILFTHSPAGVLTVAFSKDSSVPAAGGVAIENKRLCEAVLESIIGERGVSPAAKLSLAARVSELLAKETAAAADAPQAEPVSITA.

The substrate site is built by Thr-46, Asn-111, and Ser-188.

Belongs to the chalcone isomerase family. As to expression, pericarp.

The enzyme catalyses a chalcone = a flavanone.. The protein operates within secondary metabolite biosynthesis; flavonoid biosynthesis. Functionally, catalyzes the intramolecular cyclization of bicyclic chalcones into tricyclic (S)-flavanones. Responsible for the isomerization of 4,2',4',6'-tetrahydroxychalcone (also termed chalcone) into naringenin. This chain is Chalcone--flavanone isomerase (CHI), found in Zea mays (Maize).